We begin with the raw amino-acid sequence, 832 residues long: Ventricular zone-expressed PH domain-containing protein homolog 1 (832 aa).

The interaction with TGFBR1 stretch occupies residues 201–319; sequence AELLALMSQL…RYLVSQLANM (119 aa). Residues 497–519 are disordered; it reads DTHGSQLRNSSASHPSIIHSEPE. Positions 499–510 are enriched in polar residues; sequence HGSQLRNSSASH. Residues 663 to 832 form an interaction with TGFBR1 region; that stretch reads ESTFPQQKDL…RESREVTTYL (170 aa). Residues 716–818 enclose the PH domain; the sequence is QPLIEGKLKE…WLQCINVALA (103 aa).

The protein belongs to the MELT/VEPH family. Interacts with TGFBR1.

Its subcellular location is the cell membrane. Functionally, interacts with TGF-beta receptor type-1 (TGFBR1) and inhibits dissociation of activated SMAD2 from TGFBR1, impeding its nuclear accumulation and resulting in impaired TGF-beta signaling. May also affect FOXO, Hippo and Wnt signaling. The sequence is that of Ventricular zone-expressed PH domain-containing protein homolog 1 (Veph1) from Rattus norvegicus (Rat).